The sequence spans 621 residues: UvrABC system protein C (621 aa).

Positions 21-100 constitute a GIY-YIG domain; the sequence is AEPGVYLMRD…IKTYQPPYNV (80 aa). The region spanning 210–245 is the UVR domain; that stretch reads DELIRELKEKMAQAAQQENYEAAARYRDQIRGLEQL.

This sequence belongs to the UvrC family. As to quaternary structure, interacts with UvrB in an incision complex.

The protein localises to the cytoplasm. Functionally, the UvrABC repair system catalyzes the recognition and processing of DNA lesions. UvrC both incises the 5' and 3' sides of the lesion. The N-terminal half is responsible for the 3' incision and the C-terminal half is responsible for the 5' incision. In Synechococcus sp. (strain JA-3-3Ab) (Cyanobacteria bacterium Yellowstone A-Prime), this protein is UvrABC system protein C.